We begin with the raw amino-acid sequence, 437 residues long: Cytochrome c biogenesis protein Ccs1 (437 aa).

Transmembrane regions (helical) follow at residues 23–43 (LQFS…GTII), 82–102 (TWWF…CSLS), and 168–188 (LAPI…VLGL).

The protein belongs to the Ccs1/CcsB family. In terms of assembly, may interact with CcsA.

It localises to the plastid. The protein localises to the chloroplast thylakoid membrane. Functionally, required during biogenesis of c-type cytochromes (cytochrome c6 and cytochrome f) at the step of heme attachment. This chain is Cytochrome c biogenesis protein Ccs1, found in Porphyra purpurea (Red seaweed).